The primary structure comprises 143 residues: uncharacterized protein (143 aa).

The region spanning 24 to 78 (IRQRREWQNMSQTTLGEAIGVTFQQVQKYEKGVNRVGAGRLQQISKALKVEPSYF) is the HTH cro/C1-type domain. The segment at residues 35-54 (QTTLGEAIGVTFQQVQKYEK) is a DNA-binding region (H-T-H motif).

This is an uncharacterized protein from Sinorhizobium fredii (strain NBRC 101917 / NGR234).